We begin with the raw amino-acid sequence, 1310 residues long: Zinc finger protein 521 (1310 aa).

Over residues 1-10 (MSRRKQAKPR) the composition is skewed to basic residues. A disordered region spans residues 1-46 (MSRRKQAKPRSLKDPNCKLEDTSEDGESPDCKKRQEEGDELEEEEA). Residues 11–21 (SLKDPNCKLED) show a composition bias toward basic and acidic residues. The C2H2-type 1; degenerate zinc-finger motif lies at 48–68 (HSCDSCLQVFESLSDITEHKI). The interval 82–106 (DPTCSWPASSPSSKDQASPIHGEGF) is disordered. A compositionally biased stretch (polar residues) spans 87-97 (WPASSPSSKDQ). 7 consecutive C2H2-type zinc fingers follow at residues 119 to 141 (YPCQ…EQSH), 147 to 169 (FKCT…IKLH), 175 to 197 (YHCS…LKTH), 203 to 225 (YKCA…MQVH), 247 to 270 (QKCS…AECH), 282 to 305 (LQCM…EQIH), and 311 to 333 (NSCN…MDSH). The C2H2-type 9; degenerate zinc finger occupies 404-428 (YSCIYCSKQLFSSLAVLQIHLKTMH). C2H2-type zinc fingers lie at residues 436-459 (HICQ…KQVH), 476-499 (YQCN…RSSH), and 512-535 (FFCP…RQVH). A C2H2-type 13; atypical zinc finger spans residues 559–584 (YSCSYCTNSPIFNSVLKLNKHIKENH). 7 C2H2-type zinc fingers span residues 633-655 (YICN…LKTH), 663-685 (LTCP…VTIH), 693-716 (YICE…LDMH), 721-744 (FRCT…AVKH), 751-774 (YRCT…KHNH), 782-804 (HKCI…ITTH), and 808-831 (YNCK…REKH). The C2H2-type 21; degenerate zinc-finger motif lies at 885 to 907 (YGCDICGAAYTMESLLQNHQLRD). C2H2-type zinc fingers lie at residues 929 to 951 (YKCN…MQTH), 958 to 980 (YMCP…KVTH), and 1019 to 1041 (FRCV…GTFH). Residues 1064 to 1082 (YKCASCLKEFRSKQDLVKL) form a C2H2-type 25; degenerate zinc finger. C2H2-type zinc fingers lie at residues 1138–1161 (TRCS…QTIH), 1194–1216 (YQCI…VANH), 1224–1246 (HECK…LIEH), 1255–1278 (FKCP…FSAH), and 1285–1308 (YDCA…MSQH).

It belongs to the krueppel C2H2-type zinc-finger protein family.

Its subcellular location is the nucleus. In terms of biological role, transcription factor that can both act as an activator or a repressor depending on the context. Involved in BMP signaling and in the regulation of the immature compartment of the hematopoietic system. In Xenopus laevis (African clawed frog), this protein is Zinc finger protein 521 (znf521).